We begin with the raw amino-acid sequence, 736 residues long: 1,4-alpha-glucan branching enzyme GlgB (736 aa).

Asp415 functions as the Nucleophile in the catalytic mechanism. The active-site Proton donor is Glu470.

The protein belongs to the glycosyl hydrolase 13 family. GlgB subfamily. In terms of assembly, monomer.

The enzyme catalyses Transfers a segment of a (1-&gt;4)-alpha-D-glucan chain to a primary hydroxy group in a similar glucan chain.. It functions in the pathway glycan biosynthesis; glycogen biosynthesis. Functionally, catalyzes the formation of the alpha-1,6-glucosidic linkages in glycogen by scission of a 1,4-alpha-linked oligosaccharide from growing alpha-1,4-glucan chains and the subsequent attachment of the oligosaccharide to the alpha-1,6 position. The polypeptide is 1,4-alpha-glucan branching enzyme GlgB (Paraburkholderia xenovorans (strain LB400)).